We begin with the raw amino-acid sequence, 481 residues long: Arginine biosynthesis bifunctional protein ArgJ, chloroplastic (481 aa).

Substrate-binding residues include threonine 225, lysine 251, threonine 262, glutamate 349, asparagine 476, and threonine 481. Threonine 262 functions as the Nucleophile in the catalytic mechanism.

The protein belongs to the ArgJ family. As to quaternary structure, heterodimer of an alpha and a beta chain.

The protein localises to the plastid. It is found in the chloroplast. The enzyme catalyses N(2)-acetyl-L-ornithine + L-glutamate = N-acetyl-L-glutamate + L-ornithine. It catalyses the reaction L-glutamate + acetyl-CoA = N-acetyl-L-glutamate + CoA + H(+). The protein operates within amino-acid biosynthesis; L-arginine biosynthesis; L-ornithine and N-acetyl-L-glutamate from L-glutamate and N(2)-acetyl-L-ornithine (cyclic): step 1/1. It participates in amino-acid biosynthesis; L-arginine biosynthesis; N(2)-acetyl-L-ornithine from L-glutamate: step 1/4. Functionally, catalyzes two activities which are involved in the cyclic version of arginine biosynthesis: the synthesis of acetylglutamate from glutamate and acetyl-CoA, and of ornithine by transacetylation between acetylornithine and glutamate. The sequence is that of Arginine biosynthesis bifunctional protein ArgJ, chloroplastic from Populus trichocarpa (Western balsam poplar).